A 630-amino-acid polypeptide reads, in one-letter code: tRNA uridine 5-carboxymethylaminomethyl modification enzyme MnmG (630 aa).

FAD is bound at residue 13–18; the sequence is GGGHAG. 273–287 lines the NAD(+) pocket; it reads GPRYCPSIEDKIHRF.

The protein belongs to the MnmG family. As to quaternary structure, homodimer. Heterotetramer of two MnmE and two MnmG subunits. Requires FAD as cofactor.

It is found in the cytoplasm. NAD-binding protein involved in the addition of a carboxymethylaminomethyl (cmnm) group at the wobble position (U34) of certain tRNAs, forming tRNA-cmnm(5)s(2)U34. This is tRNA uridine 5-carboxymethylaminomethyl modification enzyme MnmG from Pseudomonas putida (strain W619).